Consider the following 216-residue polypeptide: uncharacterized protein (216 aa).

Residues methionine 1–lysine 216 form the N-acetyltransferase domain.

It belongs to the acetyltransferase family.

This is an uncharacterized protein from Dictyostelium discoideum (Social amoeba).